Consider the following 626-residue polypeptide: Phosphomethylpyrimidine synthase (626 aa).

The interval 1-22 (MTKQEKAINLSESAQVDQQSVQ) is disordered. Positions 10 to 22 (LSESAQVDQQSVQ) are enriched in polar residues. Substrate is bound by residues Asn232, Met261, Tyr290, His326, 346 to 348 (SRG), 387 to 390 (DGLR), and Glu426. Position 430 (His430) interacts with Zn(2+). Residue Tyr453 participates in substrate binding. His494 is a binding site for Zn(2+). Positions 574, 577, and 582 each coordinate [4Fe-4S] cluster.

It belongs to the ThiC family. As to quaternary structure, homodimer. [4Fe-4S] cluster serves as cofactor.

The catalysed reaction is 5-amino-1-(5-phospho-beta-D-ribosyl)imidazole + S-adenosyl-L-methionine = 4-amino-2-methyl-5-(phosphooxymethyl)pyrimidine + CO + 5'-deoxyadenosine + formate + L-methionine + 3 H(+). The protein operates within cofactor biosynthesis; thiamine diphosphate biosynthesis. In terms of biological role, catalyzes the synthesis of the hydroxymethylpyrimidine phosphate (HMP-P) moiety of thiamine from aminoimidazole ribotide (AIR) in a radical S-adenosyl-L-methionine (SAM)-dependent reaction. This Pseudomonas putida (strain GB-1) protein is Phosphomethylpyrimidine synthase.